The following is a 313-amino-acid chain: Ribosomal RNA small subunit methyltransferase H (313 aa).

S-adenosyl-L-methionine-binding positions include 35-37, D55, F80, D102, and Q109; that span reads GGH.

This sequence belongs to the methyltransferase superfamily. RsmH family.

The protein localises to the cytoplasm. It carries out the reaction cytidine(1402) in 16S rRNA + S-adenosyl-L-methionine = N(4)-methylcytidine(1402) in 16S rRNA + S-adenosyl-L-homocysteine + H(+). Its function is as follows. Specifically methylates the N4 position of cytidine in position 1402 (C1402) of 16S rRNA. This chain is Ribosomal RNA small subunit methyltransferase H, found in Shewanella baltica (strain OS223).